We begin with the raw amino-acid sequence, 79 residues long: Cytochrome c oxidase subunit 7A1, mitochondrial (79 aa).

Residues 1-21 (MQALRVSQALIRSFSSTARNR) constitute a mitochondrion transit peptide. At 22–46 (FQNRVREKQKLFQEDNDIPLYLKGG) the chain is on the mitochondrial matrix side. The helical transmembrane segment at 47–75 (IVDNILYRVTMTLCLGGTVYSLYSLGWAS) threads the bilayer. The Mitochondrial intermembrane segment spans residues 76–79 (FPRN).

This sequence belongs to the cytochrome c oxidase VIIa family. As to quaternary structure, component of the complex IV (CIV, cytochrome c oxidase), a multisubunit enzyme composed of 14 subunits. The complex is composed of a catalytic core of 3 subunits MT-CO1, MT-CO2 and MT-CO3, encoded in the mitochondrial DNA, and 11 supernumerary subunits COX4I1 (or COX4I2), COX5A, COX5B, COX6A2 (or COX6A1), COX6B1 (or COX6B2), COX6C, COX7A1 (or COX7A2), COX7B, COX7C, COX8B and NDUFA4, which are encoded in the nuclear genome. The complex exists as a monomer or a dimer and forms supercomplexes (SCs) in the inner mitochondrial membrane with NADH-ubiquinone oxidoreductase (complex I, CI) and ubiquinol-cytochrome c oxidoreductase (cytochrome b-c1 complex, complex III, CIII), resulting in different assemblies (supercomplex SCI(1)III(2)IV(1) and megacomplex MCI(2)III(2)IV(2)).

The protein resides in the mitochondrion inner membrane. Its pathway is energy metabolism; oxidative phosphorylation. Component of the mitochondrial respiratory complex IV (CIV, also named cytochrome c oxidase complex), the last enzyme in the mitochondrial electron transport chain which drives oxidative phosphorylation. The CIV complex is the component of the respiratory chain that catalyzes the reduction of oxygen to water. Acts as an assembly factor that specifically drives the homodimerization of CIV complexes, mediating the formation of mitochondrial respiratory supercomplexes (respirasomes) containing two CIV: supercomplxes with two molecules of CIV show improved activity. Despite being highly expressed in brown adipose tissue, not required for thermogenesis. This chain is Cytochrome c oxidase subunit 7A1, mitochondrial (COX7A1), found in Homo sapiens (Human).